A 152-amino-acid polypeptide reads, in one-letter code: S-ribosylhomocysteine lyase (152 aa).

His53, His57, and Cys120 together coordinate Fe cation.

Belongs to the LuxS family. Homodimer. Fe cation serves as cofactor.

The catalysed reaction is S-(5-deoxy-D-ribos-5-yl)-L-homocysteine = (S)-4,5-dihydroxypentane-2,3-dione + L-homocysteine. Involved in the synthesis of autoinducer 2 (AI-2) which is secreted by bacteria and is used to communicate both the cell density and the metabolic potential of the environment. The regulation of gene expression in response to changes in cell density is called quorum sensing. Catalyzes the transformation of S-ribosylhomocysteine (RHC) to homocysteine (HC) and 4,5-dihydroxy-2,3-pentadione (DPD). The sequence is that of S-ribosylhomocysteine lyase from Enterococcus faecalis (strain ATCC 700802 / V583).